Reading from the N-terminus, the 255-residue chain is Taurine import ATP-binding protein TauB (255 aa).

Positions 2 to 229 (LQISHLYADY…RFVAGESSRS (228 aa)) constitute an ABC transporter domain. 34-41 (GPSGCGKT) contributes to the ATP binding site.

The protein belongs to the ABC transporter superfamily. Taurine importer (TC 3.A.1.17.1) family. The complex is composed of two ATP-binding proteins (TauB), two transmembrane proteins (TauC) and a solute-binding protein (TauA).

The protein localises to the cell inner membrane. It carries out the reaction taurine(out) + ATP + H2O = taurine(in) + ADP + phosphate + H(+). In terms of biological role, part of the ABC transporter complex TauABC involved in taurine import. Responsible for energy coupling to the transport system. The polypeptide is Taurine import ATP-binding protein TauB (Escherichia coli O6:K15:H31 (strain 536 / UPEC)).